Consider the following 1037-residue polypeptide: MANYFIDRPVFAWVLAIIMMLAGGLAIMNLPVAQYPQIAPPTITVSATYPGADAQTVEDSVTQVIEQNMNGLDGLMYMSSTSDAAGNASITLTFETGTSPDIAQVQVQNKLQLAMPSLPEAVQQQGISVDKSSSNILMVAAFISDNGSLNQYDIADYVASNIKDPLSRTAGVGSVQLFGSEYAMRIWLDPQKLNKYNLVPSDVISQIKVQNNQISGGQLGGMPQAADQQLNASIIVQTRLQTPEEFGKILLKVQQDGSQVLLRDVARVELGAEDYSTVARYNGKPAAGIAIKLATGANALDTSRAVKEELNRLSAYFPASLKTVYPYDTTPFIKISIQEVFKTLVEAIILVFLVMYLFLQNFRATIIPTIAVPVVILGTFAILSAVGFTINTLTMFGMVLAIGLLVDDAIVVVENVERVIAEDKLPPKEATHKSMGQIQRALVGIAVVLSAVFMPMAFMSGATGEIYRQFSITLISSMLLSVFVAMSLTPALCATILKAAPEGGHKPNALFARFNTLFEKSTQHYTDSTRSLLRCTGRYMVVYLLICAGMAVLFLRTPTSFLPEEDQGVFMTTAQLPSGATMVNTTKVLQQVTDYYLTKEKNNVQSVFTVGGFGFSGQGQNNGLAFISLKPWSERVGEENSVTAIIQRAMIALSSINKAVVFPFNLPAVAELGTASGFDMELLDNGNLGHEKLTQARNELLSLAAQSPNQVIGVRPNGLEDTPMFKVNVNAAKAEAMGVALSDINQTISTAFGSSYVNDFLNQGRVKKVYVQAGTPFRMLPDNINQWYVRNASGTMAPLSAYSSTEWTYGSPRLERYNGIPSMEILGEAAAGKSTGDAMKFMADLVAKLPAGVGYSWTGLSYQEALSSNQAPALYAISLVVVFLALAALYESWSIPFSVMLVVPLGVVGALLATDLRGLSNDVYFQVGLLTTIGLSAKNAILIVEFAVEMMQKEGKTPVEAIIEAARMRLRPILMTSLAFILGVLPLVISHGAGSGAQNAVGTGVMGGMFAATVLAIYFVPVFFVVVEHLFARFKKA.

The Cytoplasmic segment spans residues 1–9; it reads MANYFIDRP. A helical membrane pass occupies residues 10–30; it reads VFAWVLAIIMMLAGGLAIMNL. Residues 31–338 lie on the Periplasmic side of the membrane; that stretch reads PVAQYPQIAP…TTPFIKISIQ (308 aa). A helical transmembrane segment spans residues 339-359; the sequence is EVFKTLVEAIILVFLVMYLFL. The Cytoplasmic segment spans residues 360–369; sequence QNFRATIIPT. Residues 370–390 form a helical membrane-spanning segment; the sequence is IAVPVVILGTFAILSAVGFTI. The Periplasmic portion of the chain corresponds to 391–392; it reads NT. Residues 393–413 traverse the membrane as a helical segment; that stretch reads LTMFGMVLAIGLLVDDAIVVV. The Cytoplasmic portion of the chain corresponds to 414 to 440; it reads ENVERVIAEDKLPPKEATHKSMGQIQR. The helical transmembrane segment at 441 to 461 threads the bilayer; that stretch reads ALVGIAVVLSAVFMPMAFMSG. Residues 462–471 lie on the Periplasmic side of the membrane; that stretch reads ATGEIYRQFS. The chain crosses the membrane as a helical span at residues 472–492; that stretch reads ITLISSMLLSVFVAMSLTPAL. At 493–534 the chain is on the cytoplasmic side; sequence CATILKAAPEGGHKPNALFARFNTLFEKSTQHYTDSTRSLLR. Residues 535–555 traverse the membrane as a helical segment; sequence CTGRYMVVYLLICAGMAVLFL. Residues 556-870 lie on the Periplasmic side of the membrane; sequence RTPTSFLPEE…SYQEALSSNQ (315 aa). The helical transmembrane segment at 871 to 891 threads the bilayer; it reads APALYAISLVVVFLALAALYE. Ser-892 is a topological domain (cytoplasmic). A helical membrane pass occupies residues 893-913; that stretch reads WSIPFSVMLVVPLGVVGALLA. At 914–927 the chain is on the periplasmic side; sequence TDLRGLSNDVYFQV. Residues 928-948 form a helical membrane-spanning segment; that stretch reads GLLTTIGLSAKNAILIVEFAV. The Cytoplasmic portion of the chain corresponds to 949-972; that stretch reads EMMQKEGKTPVEAIIEAARMRLRP. The chain crosses the membrane as a helical span at residues 973-993; that stretch reads ILMTSLAFILGVLPLVISHGA. The Periplasmic segment spans residues 994 to 1006; that stretch reads GSGAQNAVGTGVM. Residues 1007 to 1027 form a helical membrane-spanning segment; it reads GGMFAATVLAIYFVPVFFVVV. The Cytoplasmic segment spans residues 1028–1037; the sequence is EHLFARFKKA.

It belongs to the resistance-nodulation-cell division (RND) (TC 2.A.6) family. In terms of assembly, homotrimer. Part of the tripartite efflux system MdtEF-TolC, which is composed of an inner membrane transporter, MdtF, a membrane fusion protein, MdtE, and an outer membrane component, TolC. The complex forms a large protein conduit and can translocate molecules across both the inner and outer membranes.

The protein resides in the cell inner membrane. Functionally, part of the tripartite efflux system MdtEF-TolC, which confers resistance to various compounds. The sequence is that of Multidrug resistance protein MdtF (mdtF) from Escherichia coli O6:H1 (strain CFT073 / ATCC 700928 / UPEC).